The following is a 460-amino-acid chain: Retinoic acid receptor alpha (460 aa).

The tract at residues methionine 1–proline 87 is modulating. Residues histidine 46–proline 78 form a disordered region. The span at glycine 52 to glutamate 69 shows a compositional bias: polar residues. 2 consecutive NR C4-type zinc fingers follow at residues cysteine 88–cysteine 108 and cysteine 124–cysteine 148. Positions cysteine 88–methionine 153 form a DNA-binding region, nuclear receptor. The tract at residues serine 154–proline 182 is hinge. Residues glutamate 183–serine 417 form the NR LBD domain. Positions proline 408–asparagine 416 match the 9aaTAD motif. The segment at glutamate 418–proline 460 is disordered. The span at glycine 425–leucine 435 shows a compositional bias: gly residues. Residues cysteine 442 to proline 460 show a composition bias toward low complexity.

Belongs to the nuclear hormone receptor family. NR1 subfamily. Heterodimer; with an RXR molecule. Binds DNA preferentially as a RAR/RXR heterodimer. Ubiquitous.

It localises to the nucleus. Receptor for retinoic acid. Retinoic acid receptors bind as heterodimers to their target response elements in response to their ligands, all-trans or 9-cis retinoic acid, and regulate gene expression in various biological processes. The RAR/RXR heterodimers bind to the retinoic acid response elements (RARE) composed of tandem 5'-AGGTCA-3' sites known as DR1-DR5. Required for hindbrain patterning and appears to be required for skin development. This is Retinoic acid receptor alpha (RARA) from Gallus gallus (Chicken).